Here is a 264-residue protein sequence, read N- to C-terminus: Proteasome subunit beta type-4 (264 aa).

M1 carries the N-acetylmethionine modification. The propeptide occupies 1 to 45 (MEAFWESRAGHWAGGPAPGQFYRIPATPSGLMDPASAPCEGPITR). Position 102 is a phosphotyrosine (Y102).

It belongs to the peptidase T1B family. As to quaternary structure, the 26S proteasome consists of a 20S proteasome core and two 19S regulatory subunits. The 20S proteasome core is a barrel-shaped complex made of 28 subunits that are arranged in four stacked rings. The two outer rings are each formed by seven alpha subunits, and the two inner rings are formed by seven beta subunits. The proteolytic activity is exerted by three beta-subunits PSMB5, PSMB6 and PSMB7. Forms a ternary complex with SMAD1 and OAZ1 before PSMB4 is incorporated into the 20S proteasome. Interacts with PRPF19. In terms of tissue distribution, detected in liver (at protein level).

It is found in the cytoplasm. Its subcellular location is the nucleus. Non-catalytic component of the 20S core proteasome complex involved in the proteolytic degradation of most intracellular proteins. This complex plays numerous essential roles within the cell by associating with different regulatory particles. Associated with two 19S regulatory particles, forms the 26S proteasome and thus participates in the ATP-dependent degradation of ubiquitinated proteins. The 26S proteasome plays a key role in the maintenance of protein homeostasis by removing misfolded or damaged proteins that could impair cellular functions, and by removing proteins whose functions are no longer required. Associated with the PA200 or PA28, the 20S proteasome mediates ubiquitin-independent protein degradation. This type of proteolysis is required in several pathways including spermatogenesis (20S-PA200 complex) or generation of a subset of MHC class I-presented antigenic peptides (20S-PA28 complex). SMAD1/OAZ1/PSMB4 complex mediates the degradation of the CREBBP/EP300 repressor SNIP1. The chain is Proteasome subunit beta type-4 (Psmb4) from Mus musculus (Mouse).